The sequence spans 418 residues: Tyrosine--tRNA ligase (418 aa).

Tyrosine 38 provides a ligand contact to L-tyrosine. Residues 43 to 52 carry the 'HIGH' region motif; sequence CTARSLHIGS. L-tyrosine contacts are provided by tyrosine 175 and glutamine 179. Residues 235 to 239 carry the 'KMSKS' region motif; that stretch reads KMGKT. Lysine 238 is a binding site for ATP. The region spanning 348-413 is the S4 RNA-binding domain; that stretch reads LSVVKLLQVS…CGKKRHLKVV (66 aa).

Belongs to the class-I aminoacyl-tRNA synthetase family. TyrS type 1 subfamily. Homodimer.

It is found in the cytoplasm. It catalyses the reaction tRNA(Tyr) + L-tyrosine + ATP = L-tyrosyl-tRNA(Tyr) + AMP + diphosphate + H(+). In terms of biological role, catalyzes the attachment of tyrosine to tRNA(Tyr) in a two-step reaction: tyrosine is first activated by ATP to form Tyr-AMP and then transferred to the acceptor end of tRNA(Tyr). This is Tyrosine--tRNA ligase from Ehrlichia ruminantium (strain Gardel).